A 159-amino-acid polypeptide reads, in one-letter code: RNA pyrophosphohydrolase (159 aa).

The 144-residue stretch at 6–149 folds into the Nudix hydrolase domain; that stretch reads GFRPNVGIIL…KREVYRRALK (144 aa). Positions 38 to 59 match the Nudix box motif; that stretch reads GGINDRESPEEALYRELNEEVG.

The protein belongs to the Nudix hydrolase family. RppH subfamily. A divalent metal cation is required as a cofactor.

In terms of biological role, accelerates the degradation of transcripts by removing pyrophosphate from the 5'-end of triphosphorylated RNA, leading to a more labile monophosphorylated state that can stimulate subsequent ribonuclease cleavage. The chain is RNA pyrophosphohydrolase from Ectopseudomonas mendocina (strain ymp) (Pseudomonas mendocina).